The following is a 132-amino-acid chain: ATP synthase epsilon chain (132 aa).

The protein belongs to the ATPase epsilon chain family. F-type ATPases have 2 components, CF(1) - the catalytic core - and CF(0) - the membrane proton channel. CF(1) has five subunits: alpha(3), beta(3), gamma(1), delta(1), epsilon(1). CF(0) has three main subunits: a, b and c.

The protein localises to the cell inner membrane. In terms of biological role, produces ATP from ADP in the presence of a proton gradient across the membrane. This Anaeromyxobacter dehalogenans (strain 2CP-1 / ATCC BAA-258) protein is ATP synthase epsilon chain.